The sequence spans 124 residues: ATP synthase epsilon chain (124 aa).

Residues 99–118 show a composition bias toward basic and acidic residues; that stretch reads LEQAKTEGDAHAERRADVRL. Residues 99-124 are disordered; the sequence is LEQAKTEGDAHAERRADVRLRAAAGR.

This sequence belongs to the ATPase epsilon chain family. As to quaternary structure, F-type ATPases have 2 components, CF(1) - the catalytic core - and CF(0) - the membrane proton channel. CF(1) has five subunits: alpha(3), beta(3), gamma(1), delta(1), epsilon(1). CF(0) has three main subunits: a, b and c.

The protein localises to the cell membrane. Its function is as follows. Produces ATP from ADP in the presence of a proton gradient across the membrane. In Streptomyces coelicolor (strain ATCC BAA-471 / A3(2) / M145), this protein is ATP synthase epsilon chain (atpC).